The primary structure comprises 292 residues: MAMRQCAIYGKGGIGKSTTTQNLVAALAEAGKKVMIVGCDPKADSTRLILHAKAQNTIMEMAAEAGTVEDLELEDVLKVGYGDVKCVESGGPEPGVGCAGRGVITAINFLEEEGAYEDDLDFVFYDVLGDVVCGGFAMPIRENKAQEIYIVVSGEMMAMYAANNISKGIVKYANSGGVRLAGLICNSRNTDREDELIIALAERLGTQMIHFIPRDNVVQRAEIRRMTCIEYDPAAKQSDEYRELAQKIISNEKLVIPTPVTMDELEELLMDFGILEEEDESVIGKTAAELEA.

G10–S17 is an ATP binding site. Position 98 (C98) interacts with [4Fe-4S] cluster. The residue at position 101 (R101) is an ADP-ribosylarginine; by dinitrogenase reductase ADP-ribosyltransferase. C133 contributes to the [4Fe-4S] cluster binding site.

It belongs to the NifH/BchL/ChlL family. Homodimer. [4Fe-4S] cluster serves as cofactor. Post-translationally, the reversible ADP-ribosylation of Arg-101 inactivates the nitrogenase reductase and regulates nitrogenase activity.

The catalysed reaction is N2 + 8 reduced [2Fe-2S]-[ferredoxin] + 16 ATP + 16 H2O = H2 + 8 oxidized [2Fe-2S]-[ferredoxin] + 2 NH4(+) + 16 ADP + 16 phosphate + 6 H(+). Its function is as follows. The key enzymatic reactions in nitrogen fixation are catalyzed by the nitrogenase complex, which has 2 components: the iron protein and the molybdenum-iron protein. This is Nitrogenase iron protein from Teredinibacter turnerae (strain ATCC 39867 / T7901).